Consider the following 232-residue polypeptide: Phosphatidylserine decarboxylase proenzyme (232 aa).

Residue serine 190 is the Schiff-base intermediate with substrate; via pyruvic acid of the active site. Pyruvic acid (Ser); by autocatalysis is present on serine 190.

It belongs to the phosphatidylserine decarboxylase family. PSD-A subfamily. In terms of assembly, heterodimer of a large membrane-associated beta subunit and a small pyruvoyl-containing alpha subunit. It depends on pyruvate as a cofactor. Is synthesized initially as an inactive proenzyme. Formation of the active enzyme involves a self-maturation process in which the active site pyruvoyl group is generated from an internal serine residue via an autocatalytic post-translational modification. Two non-identical subunits are generated from the proenzyme in this reaction, and the pyruvate is formed at the N-terminus of the alpha chain, which is derived from the carboxyl end of the proenzyme. The post-translation cleavage follows an unusual pathway, termed non-hydrolytic serinolysis, in which the side chain hydroxyl group of the serine supplies its oxygen atom to form the C-terminus of the beta chain, while the remainder of the serine residue undergoes an oxidative deamination to produce ammonia and the pyruvoyl prosthetic group on the alpha chain.

The protein resides in the cell membrane. It catalyses the reaction a 1,2-diacyl-sn-glycero-3-phospho-L-serine + H(+) = a 1,2-diacyl-sn-glycero-3-phosphoethanolamine + CO2. Its pathway is phospholipid metabolism; phosphatidylethanolamine biosynthesis; phosphatidylethanolamine from CDP-diacylglycerol: step 2/2. In terms of biological role, catalyzes the formation of phosphatidylethanolamine (PtdEtn) from phosphatidylserine (PtdSer). This is Phosphatidylserine decarboxylase proenzyme from Rhizobium rhizogenes (strain K84 / ATCC BAA-868) (Agrobacterium radiobacter).